We begin with the raw amino-acid sequence, 87 residues long: Cell division topological specificity factor (87 aa).

It belongs to the MinE family.

Functionally, prevents the cell division inhibition by proteins MinC and MinD at internal division sites while permitting inhibition at polar sites. This ensures cell division at the proper site by restricting the formation of a division septum at the midpoint of the long axis of the cell. The protein is Cell division topological specificity factor of Leptothrix cholodnii (strain ATCC 51168 / LMG 8142 / SP-6) (Leptothrix discophora (strain SP-6)).